The chain runs to 527 residues: EGF domain-specific O-linked N-acetylglucosamine transferase (527 aa).

The signal sequence occupies residues 1 to 17 (MLKLLVLGVLLHDVSLS). Residues 295 to 297 (DYD) carry the Required for optimal activity motif. N-linked (GlcNAc...) asparagine glycosylation occurs at Asn-354. The short motif at 524-527 (RDEL) is the Prevents secretion from ER element.

The protein belongs to the glycosyltransferase 61 family.

The protein localises to the endoplasmic reticulum lumen. The enzyme catalyses L-seryl-[protein] + UDP-N-acetyl-alpha-D-glucosamine = 3-O-(N-acetyl-beta-D-glucosaminyl)-L-seryl-[protein] + UDP + H(+). It carries out the reaction L-threonyl-[protein] + UDP-N-acetyl-alpha-D-glucosamine = 3-O-(N-acetyl-beta-D-glucosaminyl)-L-threonyl-[protein] + UDP + H(+). Catalyzes the transfer of a single N-acetylglucosamine from UDP-GlcNAc to a serine or threonine residue in extracellular proteins resulting in their modification with a beta-linked N-acetylglucosamine (O-GlcNAc). Specifically glycosylates the Thr residue located between the fifth and sixth conserved cysteines of folded EGF-like domains. The sequence is that of EGF domain-specific O-linked N-acetylglucosamine transferase (EOGT) from Canis lupus familiaris (Dog).